A 672-amino-acid polypeptide reads, in one-letter code: MSEILDLSFLSEMERDLILSVLQRDEELRKADEKRIRRLKNELLEIKRKGAKRGSQHYSDRTCARCQEGLGRLISKSNTCVGCNHLVCRECRVLESNGSWRCKVCSKEIELKKATGDWFYDQKVNRFAYRTGSDIIRMSLRRKPAVNKRETVGQSLLQQTQMGDIWPGRRIIQEQQKEQSVLFEVPKLKSGKSALEAESESLDSYTADSDSTSRRDSLDKSGLFPEWKKMSAPKSQVEKEIAPGNQNAVCGDEGDMIFKKNTRKVLRPSEYTKSVIDLRPEDVAQESGILGDRSKSVPGLSVDMEDEEEEEEDIDHLVKLHRQKLARGSMQSGSSMSTIGSMMSLYSEAGDFGNVSVTGKIAFSLKFEQKTQTLVIHVKECHQLAYADEAKKRSNPYVKTYLLPDKSRQGKRKTSIKRDTINPLYDETFRYEISESLLAQRTLQFSVWHHGRFGRNTFLGEAEVHMDSWKLDKKLDHCLPLHGKISTESSPGLPAHKGELVVSLKYIPASKLPVGGDRKKSKGGEGGELQVWIKEAKNLTAAKSGGTSDSFVKGYLLPMRNKASKRKTPVMKKTLNPHYNHTFVYNGVRLEDLQHMCLELTVWDREPLASNDFLGGVRLGVGTGISSGEVVDWMDSTGEEVSLWQKMRQYPGSWAEGTLQLRSSMVKQKLGV.

The 119-residue stretch at 4–122 (ILDLSFLSEM…KATGDWFYDQ (119 aa)) folds into the RabBD domain. The FYVE-type zinc-finger motif lies at 63 to 105 (CARCQEGLGRLISKSNTCVGCNHLVCRECRVLESNGSWRCKVC). The segment at 199–222 (SESLDSYTADSDSTSRRDSLDKSG) is disordered. Phosphoserine occurs at positions 201, 204, 217, 221, and 274. The C2 1 domain occupies 357–479 (VTGKIAFSLK…KLDKKLDHCL (123 aa)). Ser-489 carries the phosphoserine modification. A C2 2 domain is found at 508–634 (PASKLPVGGD…ISSGEVVDWM (127 aa)).

Part of a ternary complex containing STX1A and RAB27A. Can bind both dominant negative and dominant active mutants of RAB27A. Binds STXBP1, RAB3A, RAB8A and RAB27B. Interacts with MYO5A. Detected in insulin-secreting cell lines.

Its subcellular location is the membrane. It is found in the cytoplasmic vesicle. The protein localises to the secretory vesicle membrane. Its function is as follows. Modulates exocytosis of dense-core granules and secretion of hormones in the pancreas and the pituitary. Interacts with vesicles containing negatively charged phospholipids in a Ca(2+)-independent manner. This is Synaptotagmin-like protein 4 (Sytl4) from Rattus norvegicus (Rat).